Reading from the N-terminus, the 124-residue chain is Small ribosomal subunit protein eS25 (124 aa).

A compositionally biased stretch (basic and acidic residues) spans proline 1–valine 22. The interval proline 1–glycine 37 is disordered. The segment covering glycine 27–glycine 37 has biased composition (basic residues). Lysine 42 is modified (N6-acetyllysine). Lysine 51 is subject to N6-acetyllysine; alternate. Residue lysine 51 is modified to N6-succinyllysine; alternate. Residues lysine 59 and lysine 65 each carry the N6-acetyllysine modification. Residue lysine 93 is modified to N6-acetyllysine; alternate. Residue lysine 93 is modified to N6-succinyllysine; alternate.

This sequence belongs to the eukaryotic ribosomal protein eS25 family. In terms of assembly, component of the small ribosomal subunit.

It localises to the cytoplasm. Its function is as follows. Component of the small ribosomal subunit. The ribosome is a large ribonucleoprotein complex responsible for the synthesis of proteins in the cell. The protein is Small ribosomal subunit protein eS25 (RPS25) of Oryctolagus cuniculus (Rabbit).